A 577-amino-acid chain; its full sequence is Arginine--tRNA ligase (577 aa).

Positions 122 to 132 match the 'HIGH' region motif; that stretch reads PNVAKEMHVGH.

This sequence belongs to the class-I aminoacyl-tRNA synthetase family. In terms of assembly, monomer.

It localises to the cytoplasm. It catalyses the reaction tRNA(Arg) + L-arginine + ATP = L-arginyl-tRNA(Arg) + AMP + diphosphate. The chain is Arginine--tRNA ligase from Escherichia coli O139:H28 (strain E24377A / ETEC).